Here is a 280-residue protein sequence, read N- to C-terminus: MAIPVNVKKWIDENREYFLPPVCNKLMQNHQLKVMFVGGPNQRKDYHIEEGEELFYQVQGDMCLKIVENGKHKDVHIKEGEMFLLPGRIPHSPQRYADTVGLVFERRRLDTEKDGLRYYVEGTTEVLFEKWFYCEDLGTQLAPIMKEFFSSEQYKSGKPDPAQPIGKMPFFLNTEQVMEPFSFQNWLNKHRLEINQKKRVSLFGHNQETKAVVYGSGESKDSKAQTDTWIWQLEGTSCVTLGNEVLKLGSGDSLLIPEKSLYSWIREDCSIALSTSQVPA.

The domain A (catalytic) stretch occupies residues 1–160 (MAIPVNVKKW…SEQYKSGKPD (160 aa)). Arginine 43 contributes to the O2 binding site. Positions 47, 53, and 91 each coordinate Fe cation. Residue glutamate 53 coordinates substrate. 2 residues coordinate substrate: arginine 95 and glutamate 105. The tract at residues 161 to 177 (PAQPIGKMPFFLNTEQV) is linker. The tract at residues 178–280 (MEPFSFQNWL…IALSTSQVPA (103 aa)) is domain B.

The protein belongs to the 3-HAO family. Monomer. Requires Fe(2+) as cofactor.

It localises to the cytoplasm. The protein localises to the cytosol. It carries out the reaction 3-hydroxyanthranilate + O2 = (2Z,4Z)-2-amino-3-carboxymuconate 6-semialdehyde. The protein operates within cofactor biosynthesis; NAD(+) biosynthesis; quinolinate from L-kynurenine: step 3/3. Its function is as follows. Catalyzes the oxidative ring opening of 3-hydroxyanthranilate to 2-amino-3-carboxymuconate semialdehyde, which spontaneously cyclizes to quinolinate. The chain is 3-hydroxyanthranilate 3,4-dioxygenase (haao) from Xenopus tropicalis (Western clawed frog).